The chain runs to 373 residues: 4-hydroxy-3-methylbut-2-en-1-yl diphosphate synthase (flavodoxin) (373 aa).

[4Fe-4S] cluster-binding residues include Cys270, Cys273, Cys305, and Glu312.

This sequence belongs to the IspG family. It depends on [4Fe-4S] cluster as a cofactor.

It catalyses the reaction (2E)-4-hydroxy-3-methylbut-2-enyl diphosphate + oxidized [flavodoxin] + H2O + 2 H(+) = 2-C-methyl-D-erythritol 2,4-cyclic diphosphate + reduced [flavodoxin]. Its pathway is isoprenoid biosynthesis; isopentenyl diphosphate biosynthesis via DXP pathway; isopentenyl diphosphate from 1-deoxy-D-xylulose 5-phosphate: step 5/6. Converts 2C-methyl-D-erythritol 2,4-cyclodiphosphate (ME-2,4cPP) into 1-hydroxy-2-methyl-2-(E)-butenyl 4-diphosphate. This is 4-hydroxy-3-methylbut-2-en-1-yl diphosphate synthase (flavodoxin) from Serratia proteamaculans (strain 568).